We begin with the raw amino-acid sequence, 278 residues long: 4-deoxy-L-threo-5-hexosulose-uronate ketol-isomerase (278 aa).

Zn(2+) contacts are provided by His196, His198, Glu203, and His245.

Belongs to the KduI family. It depends on Zn(2+) as a cofactor.

The catalysed reaction is 5-dehydro-4-deoxy-D-glucuronate = 3-deoxy-D-glycero-2,5-hexodiulosonate. It functions in the pathway glycan metabolism; pectin degradation; 2-dehydro-3-deoxy-D-gluconate from pectin: step 4/5. Functionally, catalyzes the isomerization of 5-dehydro-4-deoxy-D-glucuronate to 3-deoxy-D-glycero-2,5-hexodiulosonate. In Yersinia pseudotuberculosis serotype O:1b (strain IP 31758), this protein is 4-deoxy-L-threo-5-hexosulose-uronate ketol-isomerase.